Consider the following 583-residue polypeptide: Moesin/ezrin/radixin homolog 1 (583 aa).

Residues 11 to 301 (MNVRVTTMDA…GNHELYMRRR (291 aa)) enclose the FERM domain. 2 disordered regions span residues 466 to 518 (TTTP…RTLA) and 539 to 558 (RDDT…VRQG). Over residues 476–485 (EEEEDNEEEL) the composition is skewed to acidic residues. Residues 496 to 518 (DYSKDFDTDEHIKDPVEERRTLA) are compositionally biased toward basic and acidic residues. At Thr564 the chain carries Phosphothreonine.

As to quaternary structure, interacts with cytoskeletal actin.

Its subcellular location is the cell junction. It localises to the adherens junction. The protein localises to the cell projection. The protein resides in the microvillus. It is found in the rhabdomere. Its subcellular location is the cell membrane. It localises to the cytoplasm. The protein localises to the cytoskeleton. Functionally, involved in connections of major cytoskeletal structures to the plasma membrane. This is Moesin/ezrin/radixin homolog 1 from Aedes aegypti (Yellowfever mosquito).